Here is a 675-residue protein sequence, read N- to C-terminus: Rho guanine nucleotide exchange factor 37 (675 aa).

The disordered stretch occupies residues 1-26 (MAKHGADEPSSRSGSPDREGRASEDR). The region spanning 30–213 (HQRLAVRELI…QDVNTNINEY (184 aa)) is the DH domain. In terms of domain architecture, BAR spans 254-455 (LKQEAGLIPR…LPHHHVPEPA (202 aa)). 2 consecutive SH3 domains span residues 506-569 (GPGK…LYHV) and 602-665 (PTMN…RARS).

Functionally, may act as a guanine nucleotide exchange factor (GEF). The chain is Rho guanine nucleotide exchange factor 37 (ARHGEF37) from Homo sapiens (Human).